A 506-amino-acid chain; its full sequence is U3 small nucleolar RNA-associated protein 18 homolog (506 aa).

The span at 1 to 11 shows a compositional bias: acidic residues; sequence MSSDESSDGLE. Disordered regions lie at residues 1-44 and 69-126; these read MSSD…SQAK and AKSV…PLNH. Positions 24 to 37 are enriched in basic and acidic residues; sequence EQEKPAKIKRERYI. S102, S104, S164, and S165 each carry phosphoserine. WD repeat units lie at residues 203–242, 331–370, 372–413, and 469–505; these read YAEGNATSIQFHPTSTAALVAGMNGLATIYAVDGQKNERL, KQEGKVKGFTWSSDSKRILVCGSTSNVSVLNLRQNLIEHI, MDDG…ASKA, and EKVGFVTSMAFSPHSSFLAFATKGKQVPLFRLKYFKG.

The protein belongs to the WD repeat UTP18 family. Component of U3 snoRNP complex.

It is found in the nucleus. The protein localises to the nucleolus. Its function is as follows. Component of a nucleolar small nuclear ribonucleoprotein particle (snoRNP) thought to participate in the processing and modification of pre-ribosomal RNA. Regulation of cell size by ribosome synthesis is an important parameter for stem cell maintenance and function. This Drosophila melanogaster (Fruit fly) protein is U3 small nucleolar RNA-associated protein 18 homolog (wcd).